The sequence spans 419 residues: Glucose-1-phosphate adenylyltransferase (419 aa).

Alpha-D-glucose 1-phosphate-binding positions include Tyr107, Gly172, 187–188 (EK), and Ser205.

It belongs to the bacterial/plant glucose-1-phosphate adenylyltransferase family. Homotetramer.

It catalyses the reaction alpha-D-glucose 1-phosphate + ATP + H(+) = ADP-alpha-D-glucose + diphosphate. It functions in the pathway glycan biosynthesis; glycogen biosynthesis. Functionally, involved in the biosynthesis of ADP-glucose, a building block required for the elongation reactions to produce glycogen. Catalyzes the reaction between ATP and alpha-D-glucose 1-phosphate (G1P) to produce pyrophosphate and ADP-Glc. This chain is Glucose-1-phosphate adenylyltransferase, found in Novosphingobium aromaticivorans (strain ATCC 700278 / DSM 12444 / CCUG 56034 / CIP 105152 / NBRC 16084 / F199).